We begin with the raw amino-acid sequence, 500 residues long: tRNA nucleotidyltransferase cca1 (500 aa).

Positions 122–139 are flexible loop; the sequence is DYTNSNSSNKLVFGTPLE. Positions 231–241 match the ERhxxExxxhh motif motif; that stretch reads ERIGVEVDKML.

It belongs to the tRNA nucleotidyltransferase/poly(A) polymerase family.

The catalysed reaction is a tRNA precursor + 2 CTP = a tRNA with a 3' CC end + 2 diphosphate. Its function is as follows. tRNA nucleotidyltransferase involved in the synthesis of the tRNA CCA terminus. In contrast to what is usually observed in eukaryotes for which one enzyme synthesizes the whole tRNA CCA terminus, in S.pombe, cca1 specifically adds two cytidine residues to a tRNA substrate lacking this sequence while cca2 specifically adds the terminal adenosine residue thereby completing the CCA sequence. The sequence is that of tRNA nucleotidyltransferase cca1 from Schizosaccharomyces pombe (strain 972 / ATCC 24843) (Fission yeast).